The chain runs to 358 residues: Holliday junction branch migration complex subunit RuvB (358 aa).

The tract at residues 1–24 is disordered; that stretch reads MAIKRSHNSPPATEENLLTPNPTI. A compositionally biased stretch (polar residues) spans 8–22; sequence NSPPATEENLLTPNP. The segment at 13–195 is large ATPase domain (RuvB-L); the sequence is TEENLLTPNP…FGLIQRLRFY (183 aa). ATP contacts are provided by residues Ile34, Arg35, Gly76, Lys79, Thr80, Thr81, 142–144, Arg185, Tyr195, and Arg232; that span reads EDY. Thr80 is a Mg(2+) binding site. Positions 196–266 are small ATPAse domain (RuvB-S); that stretch reads AVEELTAIIL…LAAEGLNQLN (71 aa). The head domain (RuvB-H) stretch occupies residues 269–358; the sequence is SMGLDWTDRL…KDRSLPLFEF (90 aa). Residues Arg324 and Arg329 each contribute to the DNA site.

It belongs to the RuvB family. Homohexamer. Forms an RuvA(8)-RuvB(12)-Holliday junction (HJ) complex. HJ DNA is sandwiched between 2 RuvA tetramers; dsDNA enters through RuvA and exits via RuvB. An RuvB hexamer assembles on each DNA strand where it exits the tetramer. Each RuvB hexamer is contacted by two RuvA subunits (via domain III) on 2 adjacent RuvB subunits; this complex drives branch migration. In the full resolvosome a probable DNA-RuvA(4)-RuvB(12)-RuvC(2) complex forms which resolves the HJ.

It localises to the cytoplasm. It catalyses the reaction ATP + H2O = ADP + phosphate + H(+). The RuvA-RuvB-RuvC complex processes Holliday junction (HJ) DNA during genetic recombination and DNA repair, while the RuvA-RuvB complex plays an important role in the rescue of blocked DNA replication forks via replication fork reversal (RFR). RuvA specifically binds to HJ cruciform DNA, conferring on it an open structure. The RuvB hexamer acts as an ATP-dependent pump, pulling dsDNA into and through the RuvAB complex. RuvB forms 2 homohexamers on either side of HJ DNA bound by 1 or 2 RuvA tetramers; 4 subunits per hexamer contact DNA at a time. Coordinated motions by a converter formed by DNA-disengaged RuvB subunits stimulates ATP hydrolysis and nucleotide exchange. Immobilization of the converter enables RuvB to convert the ATP-contained energy into a lever motion, pulling 2 nucleotides of DNA out of the RuvA tetramer per ATP hydrolyzed, thus driving DNA branch migration. The RuvB motors rotate together with the DNA substrate, which together with the progressing nucleotide cycle form the mechanistic basis for DNA recombination by continuous HJ branch migration. Branch migration allows RuvC to scan DNA until it finds its consensus sequence, where it cleaves and resolves cruciform DNA. This Microcystis aeruginosa (strain NIES-843 / IAM M-2473) protein is Holliday junction branch migration complex subunit RuvB.